A 447-amino-acid chain; its full sequence is UDP-N-acetyl-alpha-D-muramoyl-L-alanyl-L-glutamate epimerase (447 aa).

It belongs to the MurL family.

The catalysed reaction is UDP-N-acetyl-alpha-D-muramoyl-L-alanyl-L-glutamate + ATP + H2O = UDP-N-acetyl-alpha-D-muramoyl-L-alanyl-D-glutamate + AMP + diphosphate + H(+). It participates in cell wall biogenesis; peptidoglycan biosynthesis. In terms of biological role, cell wall formation. Catalyzes epimerization of the terminal L-glutamate in UDP-N-acetyl-alpha-D-muramoyl-L-alanyl-L-glutamate. The chain is UDP-N-acetyl-alpha-D-muramoyl-L-alanyl-L-glutamate epimerase from Micromonospora sp. (strain ATCC 39149 / NRRL 15099 / SCC 1413).